The sequence spans 602 residues: Sulfite reductase [NADPH] hemoprotein beta-component (602 aa).

Residues 1-23 (MDDTKTASPAPARAYETPPAERP) are disordered. Residues cysteine 458, cysteine 464, cysteine 503, and cysteine 507 each contribute to the [4Fe-4S] cluster site. Cysteine 507 contacts siroheme.

Belongs to the nitrite and sulfite reductase 4Fe-4S domain family. As to quaternary structure, alpha(8)-beta(8). The alpha component is a flavoprotein, the beta component is a hemoprotein. The cofactor is siroheme. [4Fe-4S] cluster serves as cofactor.

The catalysed reaction is hydrogen sulfide + 3 NADP(+) + 3 H2O = sulfite + 3 NADPH + 4 H(+). The protein operates within sulfur metabolism; hydrogen sulfide biosynthesis; hydrogen sulfide from sulfite (NADPH route): step 1/1. Its function is as follows. Component of the sulfite reductase complex that catalyzes the 6-electron reduction of sulfite to sulfide. This is one of several activities required for the biosynthesis of L-cysteine from sulfate. This is Sulfite reductase [NADPH] hemoprotein beta-component from Methylobacterium sp. (strain 4-46).